The primary structure comprises 381 residues: Alkanesulfonate monooxygenase (381 aa).

Belongs to the SsuD family. Homotetramer.

It carries out the reaction an alkanesulfonate + FMNH2 + O2 = an aldehyde + FMN + sulfite + H2O + 2 H(+). In terms of biological role, catalyzes the desulfonation of aliphatic sulfonates. This is Alkanesulfonate monooxygenase from Escherichia coli O81 (strain ED1a).